The sequence spans 531 residues: Fatty acid--[acyl-carrier-protein] ligase MmaC (531 aa).

Residue T169 participates in Mg(2+) binding. ATP is bound by residues I218, V308, and S312. E313 serves as a coordination point for Mg(2+). Position 403 (D403) interacts with ATP.

This sequence belongs to the ATP-dependent AMP-binding enzyme family. Mg(2+) is required as a cofactor.

The catalysed reaction is a (2E)-enoyl fatty acid + holo-[ACP] + ATP = a (2E)-enoyl-[ACP] + AMP + diphosphate. It carries out the reaction a (2E)-enoyl fatty acid + ATP + H(+) = a (2E)-2-fatty-enoyl-AMP + diphosphate. It catalyses the reaction a (2E)-2-fatty-enoyl-AMP + holo-[ACP] = a (2E)-enoyl-[ACP] + AMP + H(+). The enzyme catalyses (2E)-decenoate + holo-[ACP] + ATP = (2E)-decenoyl-[ACP] + AMP + diphosphate. The catalysed reaction is a (3R)-3-isocyanyl-fatty acid + holo-[ACP] + ATP = a (3R)-3-isocyanyl-fatty acyl-[ACP] + AMP + diphosphate. It carries out the reaction a (3R)-3-isocyanyl-fatty acid + ATP + H(+) = a (3R)-3-isocyanyl-fatty acyl-AMP + diphosphate. It catalyses the reaction a (3R)-3-isocyanyl-fatty acyl-AMP + holo-[ACP] = a (3R)-3-isocyanyl-fatty acyl-[ACP] + AMP + H(+). Its function is as follows. Acyl:acyl-carrier protein ligase involved in the biosynthesis of a unique class of isonitrile lipopeptides (INLPs) that seem to play a role in metal acquisition in M.marinum. Acts twice during the INLP pathway, catalyzing the activation of (2E)-2-decenoate as well as probably the corresponding (3R)-3-isocyanyl-fatty acid as acyl-adenylates (acyl-AMP), and then the acyl transfer to the dedicated acyl-carrier protein MmaB. The protein is Fatty acid--[acyl-carrier-protein] ligase MmaC of Mycobacterium marinum (strain ATCC BAA-535 / M).